The chain runs to 553 residues: Hydroxylamine reductase (553 aa).

Residues Cys-3, Cys-6, Cys-18, and Cys-25 each contribute to the [2Fe-2S] cluster site. Hybrid [4Fe-2O-2S] cluster-binding residues include His-252, Glu-276, Cys-320, Cys-408, Cys-436, Cys-461, Glu-495, and Lys-497. The residue at position 408 (Cys-408) is a Cysteine persulfide.

The protein belongs to the HCP family. It depends on [2Fe-2S] cluster as a cofactor. Hybrid [4Fe-2O-2S] cluster serves as cofactor.

The protein localises to the cytoplasm. The catalysed reaction is A + NH4(+) + H2O = hydroxylamine + AH2 + H(+). Its function is as follows. Catalyzes the reduction of hydroxylamine to form NH(3) and H(2)O. The polypeptide is Hydroxylamine reductase (Photobacterium phosphoreum).